Reading from the N-terminus, the 150-residue chain is Putative FAD-linked sulfhydryl oxidase 088R (150 aa).

The ERV/ALR sulfhydryl oxidase domain maps to 24–128 (GPFGPSGFGP…VTLQKAICIY (105 aa)). An intrachain disulfide couples C74 to C77.

FAD serves as cofactor.

It catalyses the reaction 2 R'C(R)SH + O2 = R'C(R)S-S(R)CR' + H2O2. Its function is as follows. FAD-dependent sulfhydryl oxidase that catalyzes disulfide bond formation. This chain is Putative FAD-linked sulfhydryl oxidase 088R, found in Dryophytes versicolor (chameleon treefrog).